Here is a 215-residue protein sequence, read N- to C-terminus: Probable phosphoglycerate mutase GpmB (215 aa).

Residues Arg8–Asn15, Gln21–Gly22, Arg58, Glu82–Met85, Arg104–Arg105, and Gly151–Ile152 contribute to the substrate site. The active-site Tele-phosphohistidine intermediate is the His9. Catalysis depends on Glu82, which acts as the Proton donor/acceptor.

It belongs to the phosphoglycerate mutase family. GpmB subfamily.

It catalyses the reaction (2R)-2-phosphoglycerate = (2R)-3-phosphoglycerate. The protein operates within carbohydrate degradation; glycolysis; pyruvate from D-glyceraldehyde 3-phosphate: step 3/5. This Enterobacter sp. (strain 638) protein is Probable phosphoglycerate mutase GpmB.